We begin with the raw amino-acid sequence, 447 residues long: ATP synthase subunit beta (447 aa).

147 to 154 contributes to the ATP binding site; sequence GGAGVGKT.

It belongs to the ATPase alpha/beta chains family. F-type ATPases have 2 components, CF(1) - the catalytic core - and CF(0) - the membrane proton channel. CF(1) has five subunits: alpha(3), beta(3), gamma(1), delta(1), epsilon(1). CF(0) has three main subunits: a(1), b(2) and c(9-12). The alpha and beta chains form an alternating ring which encloses part of the gamma chain. CF(1) is attached to CF(0) by a central stalk formed by the gamma and epsilon chains, while a peripheral stalk is formed by the delta and b chains.

The protein localises to the cell membrane. The enzyme catalyses ATP + H2O + 4 H(+)(in) = ADP + phosphate + 5 H(+)(out). In terms of biological role, produces ATP from ADP in the presence of a proton gradient across the membrane. The catalytic sites are hosted primarily by the beta subunits. The protein is ATP synthase subunit beta of Carsonella ruddii (strain PV).